Here is a 92-residue protein sequence, read N- to C-terminus: Putative pterin-4-alpha-carbinolamine dehydratase (92 aa).

This sequence belongs to the pterin-4-alpha-carbinolamine dehydratase family.

It catalyses the reaction (4aS,6R)-4a-hydroxy-L-erythro-5,6,7,8-tetrahydrobiopterin = (6R)-L-erythro-6,7-dihydrobiopterin + H2O. This chain is Putative pterin-4-alpha-carbinolamine dehydratase, found in Haloarcula marismortui (strain ATCC 43049 / DSM 3752 / JCM 8966 / VKM B-1809) (Halobacterium marismortui).